A 312-amino-acid chain; its full sequence is MKALWAVLLVTLLAGCLAEGEPEVTDQLEWQSSQPWEQALNRFWDYLRWVQTLSDQVQEELQSSQVTQELTVLMEDTMTEVKAYKKELEEQLGPVAEETRARLAKEVQAAQARLGADMEDLRNRLGQYRNEVHTMLGQSTEEIRARLSTHLRKMRKRLMRDAEDLQKRLAVYKAGAREGAERGVSALRERLGPLVEQGRQRTANLGAGAAQPLRDRAQAFGDRIRGRLEEVGNQARDRLEEVREHMEEVRSKMEEQTQQIRLQAEIFQARLKGWFEPIVEDMHRQWANLMEKIQASVATNPIISTPMPQENQ.

The first 18 residues, 1–18, serve as a signal peptide directing secretion; the sequence is MKALWAVLLVTLLAGCLA. 8 repeat units span residues 72–93, 94–115, 116–137, 138–159, 160–181, 182–203, 204–225, and 226–247. The 8 X 22 AA approximate tandem repeats stretch occupies residues 72–247; it reads VLMEDTMTEV…RLEEVREHME (176 aa). Met-135 is subject to Methionine sulfoxide. Phosphoserine is present on Ser-139. Residues 150 to 160 form an LDL and other lipoprotein receptors binding region; that stretch reads HLRKMRKRLMR. Residue 154-157 coordinates heparin; it reads MRKR. Residues 202–282 are lipid-binding and lipoprotein association; that stretch reads TANLGAGAAQ…GWFEPIVEDM (81 aa). Position 221–228 (221–228) interacts with heparin; that stretch reads GDRIRGRL. Residues 258-312 are homooligomerization; that stretch reads QQIRLQAEIFQARLKGWFEPIVEDMHRQWANLMEKIQASVATNPIISTPMPQENQ. A specificity for association with VLDL region spans residues 270 to 282; that stretch reads RLKGWFEPIVEDM.

The protein belongs to the apolipoprotein A1/A4/E family. In terms of assembly, homotetramer. May interact with ABCA1; functionally associated with ABCA1 in the biogenesis of HDLs. May interact with APP/A4 amyloid-beta peptide; the interaction is extremely stable in vitro but its physiological significance is unclear. May interact with MAPT. May interact with MAP2. In the cerebrospinal fluid, interacts with secreted SORL1. Interacts with PMEL; this allows the loading of PMEL luminal fragment on ILVs to induce fibril nucleation. APOE exists as multiple glycosylated and sialylated glycoforms within cells and in plasma. The extent of glycosylation and sialylation are tissue and context specific. Post-translationally, glycated in plasma VLDL. In terms of processing, phosphorylated by FAM20C in the extracellular medium.

It is found in the secreted. It localises to the extracellular space. The protein resides in the extracellular matrix. The protein localises to the extracellular vesicle. Its subcellular location is the endosome. It is found in the multivesicular body. In terms of biological role, APOE is an apolipoprotein, a protein associating with lipid particles, that mainly functions in lipoprotein-mediated lipid transport between organs via the plasma and interstitial fluids. APOE is a core component of plasma lipoproteins and is involved in their production, conversion and clearance. Apolipoproteins are amphipathic molecules that interact both with lipids of the lipoprotein particle core and the aqueous environment of the plasma. As such, APOE associates with chylomicrons, chylomicron remnants, very low density lipoproteins (VLDL) and intermediate density lipoproteins (IDL) but shows a preferential binding to high-density lipoproteins (HDL). It also binds a wide range of cellular receptors including the LDL receptor/LDLR, the LDL receptor-related proteins LRP1, LRP2 and LRP8 and the very low-density lipoprotein receptor/VLDLR that mediate the cellular uptake of the APOE-containing lipoprotein particles. Finally, APOE also has a heparin-binding activity and binds heparan-sulfate proteoglycans on the surface of cells, a property that supports the capture and the receptor-mediated uptake of APOE-containing lipoproteins by cells. A main function of APOE is to mediate lipoprotein clearance through the uptake of chylomicrons, VLDLs, and HDLs by hepatocytes. APOE is also involved in the biosynthesis by the liver of VLDLs as well as their uptake by peripheral tissues ensuring the delivery of triglycerides and energy storage in muscle, heart and adipose tissues. By participating in the lipoprotein-mediated distribution of lipids among tissues, APOE plays a critical role in plasma and tissues lipid homeostasis. APOE is also involved in two steps of reverse cholesterol transport, the HDLs-mediated transport of cholesterol from peripheral tissues to the liver, and thereby plays an important role in cholesterol homeostasis. First, it is functionally associated with ABCA1 in the biogenesis of HDLs in tissues. Second, it is enriched in circulating HDLs and mediates their uptake by hepatocytes. APOE also plays an important role in lipid transport in the central nervous system, regulating neuron survival and sprouting. This is Apolipoprotein E (Apoe) from Mus pahari (Gairdner's shrew-mouse).